The sequence spans 79 residues: Dolichyl-diphosphooligosaccharide--protein glycosyltransferase subunit TMEM258 (79 aa).

An N-acetylmethionine modification is found at methionine 1. The Lumenal portion of the chain corresponds to 1–16; it reads MELEAMSRYTSPVNPA. The chain crosses the membrane as a helical span at residues 17-37; the sequence is VFPHLTVVLLAIGMFFTAWFF. At 38 to 54 the chain is on the cytoplasmic side; it reads VYEVTSTKYTRDICKEL. The chain crosses the membrane as a helical span at residues 55–75; the sequence is LISLVASLFMGFGVLFLLLWV. Residues 76–79 lie on the Lumenal side of the membrane; that stretch reads GIYV.

The protein belongs to the OST5 family. In terms of assembly, component of the oligosaccharyltransferase (OST) complex. OST exists in two different complex forms which contain common core subunits RPN1, RPN2, OST48, OST4, DAD1 and TMEM258, either STT3A or STT3B as catalytic subunits, and form-specific accessory subunits. STT3A complex assembly occurs through the formation of 3 subcomplexes. Subcomplex 1 contains RPN1 and TMEM258, subcomplex 2 contains the STT3A-specific subunits STT3A, DC2/OSTC, and KCP2 as well as the core subunit OST4, and subcomplex 3 contains RPN2, DAD1, and OST48. The STT3A complex can form stable complexes with the Sec61 complex or with both the Sec61 and TRAP complexes.

The protein resides in the membrane. The protein localises to the endoplasmic reticulum. It localises to the cytoplasm. The protein operates within protein modification; protein glycosylation. Subunit of the oligosaccharyl transferase (OST) complex that catalyzes the initial transfer of a defined glycan (Glc(3)Man(9)GlcNAc(2) in eukaryotes) from the lipid carrier dolichol-pyrophosphate to an asparagine residue within an Asn-X-Ser/Thr consensus motif in nascent polypeptide chains, the first step in protein N-glycosylation. N-glycosylation occurs cotranslationally and the complex associates with the Sec61 complex at the channel-forming translocon complex that mediates protein translocation across the endoplasmic reticulum (ER). All subunits are required for a maximal enzyme activity. This chain is Dolichyl-diphosphooligosaccharide--protein glycosyltransferase subunit TMEM258, found in Canis lupus familiaris (Dog).